The chain runs to 48 residues: Protein PsbN (48 aa).

The chain crosses the membrane as a helical span at residues 12–34 (LLIAMVTITFGLTGYGLYTAFGP).

Belongs to the PsbN family.

The protein localises to the cellular thylakoid membrane. Functionally, may play a role in photosystem I and II biogenesis. This chain is Protein PsbN, found in Prochlorococcus marinus (strain MIT 9313).